Reading from the N-terminus, the 180-residue chain is Outer membrane protein YfaZ (180 aa).

Positions 1–21 are cleaved as a signal peptide; the sequence is MKKIALAGLAGMLLVSASVNA.

It localises to the cell outer membrane. The polypeptide is Outer membrane protein YfaZ (yfaZ) (Escherichia coli (strain K12)).